We begin with the raw amino-acid sequence, 157 residues long: 2-C-methyl-D-erythritol 2,4-cyclodiphosphate synthase (157 aa).

A divalent metal cation contacts are provided by D8 and H10. Residues 8–10 and 34–35 each bind 4-CDP-2-C-methyl-D-erythritol 2-phosphate; these read DVH and HS. H42 contributes to the a divalent metal cation binding site. 4-CDP-2-C-methyl-D-erythritol 2-phosphate is bound by residues 56–58, 132–135, and R142; these read DIG and TTNE.

The protein belongs to the IspF family. As to quaternary structure, homotrimer. A divalent metal cation is required as a cofactor.

The catalysed reaction is 4-CDP-2-C-methyl-D-erythritol 2-phosphate = 2-C-methyl-D-erythritol 2,4-cyclic diphosphate + CMP. The protein operates within isoprenoid biosynthesis; isopentenyl diphosphate biosynthesis via DXP pathway; isopentenyl diphosphate from 1-deoxy-D-xylulose 5-phosphate: step 4/6. Functionally, involved in the biosynthesis of isopentenyl diphosphate (IPP) and dimethylallyl diphosphate (DMAPP), two major building blocks of isoprenoid compounds. Catalyzes the conversion of 4-diphosphocytidyl-2-C-methyl-D-erythritol 2-phosphate (CDP-ME2P) to 2-C-methyl-D-erythritol 2,4-cyclodiphosphate (ME-CPP) with a corresponding release of cytidine 5-monophosphate (CMP). In Chlorobaculum parvum (strain DSM 263 / NCIMB 8327) (Chlorobium vibrioforme subsp. thiosulfatophilum), this protein is 2-C-methyl-D-erythritol 2,4-cyclodiphosphate synthase.